Reading from the N-terminus, the 306-residue chain is Pantothenate kinase (306 aa).

Residue 91 to 98 (GSVAVGKS) participates in ATP binding.

This sequence belongs to the prokaryotic pantothenate kinase family.

It localises to the cytoplasm. It carries out the reaction (R)-pantothenate + ATP = (R)-4'-phosphopantothenate + ADP + H(+). It participates in cofactor biosynthesis; coenzyme A biosynthesis; CoA from (R)-pantothenate: step 1/5. In Streptococcus pneumoniae serotype 2 (strain D39 / NCTC 7466), this protein is Pantothenate kinase.